The following is a 615-amino-acid chain: Threonine--tRNA ligase (615 aa).

An editing domain region spans residues 1–132; the sequence is MRILQLHCDR…PLAEGFKVIT (132 aa). The tract at residues 196–495 is catalytic; it reads PHVALMKRMG…SARGTKPELP (300 aa). Cys-288, His-340, and His-464 together coordinate Zn(2+).

The protein belongs to the class-II aminoacyl-tRNA synthetase family. Homodimer. Zn(2+) is required as a cofactor.

It localises to the cytoplasm. The catalysed reaction is tRNA(Thr) + L-threonine + ATP = L-threonyl-tRNA(Thr) + AMP + diphosphate + H(+). Catalyzes the attachment of threonine to tRNA(Thr) in a two-step reaction: L-threonine is first activated by ATP to form Thr-AMP and then transferred to the acceptor end of tRNA(Thr). Also edits incorrectly charged L-seryl-tRNA(Thr). The sequence is that of Threonine--tRNA ligase (thrS) from Cenarchaeum symbiosum (strain A).